The following is a 304-amino-acid chain: Ribosomal protein L11 methyltransferase (304 aa).

Residues T147, G168, D190, and N238 each coordinate S-adenosyl-L-methionine.

The protein belongs to the methyltransferase superfamily. PrmA family.

The protein localises to the cytoplasm. The catalysed reaction is L-lysyl-[protein] + 3 S-adenosyl-L-methionine = N(6),N(6),N(6)-trimethyl-L-lysyl-[protein] + 3 S-adenosyl-L-homocysteine + 3 H(+). Functionally, methylates ribosomal protein L11. This chain is Ribosomal protein L11 methyltransferase, found in Prochlorococcus marinus (strain SARG / CCMP1375 / SS120).